The following is a 257-amino-acid chain: Putative aldolase class 2 protein CC_1201 (257 aa).

Residues His-114, His-116, and His-177 each contribute to the Zn(2+) site.

It belongs to the aldolase class II family. Requires Zn(2+) as cofactor.

This Caulobacter vibrioides (strain ATCC 19089 / CIP 103742 / CB 15) (Caulobacter crescentus) protein is Putative aldolase class 2 protein CC_1201.